We begin with the raw amino-acid sequence, 456 residues long: Histidine--tRNA ligase (456 aa).

This sequence belongs to the class-II aminoacyl-tRNA synthetase family. In terms of assembly, homodimer.

It is found in the cytoplasm. The enzyme catalyses tRNA(His) + L-histidine + ATP = L-histidyl-tRNA(His) + AMP + diphosphate + H(+). The protein is Histidine--tRNA ligase of Borrelia garinii subsp. bavariensis (strain ATCC BAA-2496 / DSM 23469 / PBi) (Borreliella bavariensis).